The sequence spans 193 residues: Peptidyl-tRNA hydrolase (193 aa).

Y17 contacts tRNA. The active-site Proton acceptor is the H22. 3 residues coordinate tRNA: Y69, N71, and N117.

It belongs to the PTH family. As to quaternary structure, monomer.

The protein localises to the cytoplasm. The catalysed reaction is an N-acyl-L-alpha-aminoacyl-tRNA + H2O = an N-acyl-L-amino acid + a tRNA + H(+). Hydrolyzes ribosome-free peptidyl-tRNAs (with 1 or more amino acids incorporated), which drop off the ribosome during protein synthesis, or as a result of ribosome stalling. Functionally, catalyzes the release of premature peptidyl moieties from peptidyl-tRNA molecules trapped in stalled 50S ribosomal subunits, and thus maintains levels of free tRNAs and 50S ribosomes. In Leifsonia xyli subsp. xyli (strain CTCB07), this protein is Peptidyl-tRNA hydrolase.